The sequence spans 965 residues: 26S proteasome non-ATPase regulatory subunit 1 (965 aa).

PC repeat units lie at residues 380-413 (NAVASLGLIHHGQESSAMKVLEPYLPKESVEGFG), 418-452 (GAMLAYGLIHAKHGDATAMSTLAQWLKTAENEPVR), 454-488 (GACLGFGVAGLGSSSVSNYEKVREVLQRDEAVSGE), 489-523 (SAGIAMGLIMAGHLNQEVFNELKQYTVDTQHDKTQ), 560-595 (TGICMLSMAYAGTGSPDVVRRLLEKVATDPNLDVKR), 630-664 (GAAMALGIACAGTGNMEAIALIEPMISDKEGFVRK), 665-706 (GALL…SLVK), and 708-738 (GAIIAQGLLDIGGQNAAVTMQNSDKQPDMGS). The span at 836–856 (ASASSAAAAPSSSSTSGTAPA) shows a compositional bias: low complexity. 2 disordered regions span residues 836-889 (ASAS…LQNP) and 943-965 (TPASSGNTENKPHSTFEININDF). Over residues 863-882 (EVDQPGKSKKEKAPEKDTKP) the composition is skewed to basic and acidic residues.

The protein belongs to the proteasome subunit S1 family.

Its function is as follows. Acts as a regulatory subunit of the 26 proteasome which is involved in the ATP-dependent degradation of ubiquitinated proteins. The sequence is that of 26S proteasome non-ATPase regulatory subunit 1 (rpn-2) from Caenorhabditis elegans.